The primary structure comprises 119 residues: Large ribosomal subunit protein uL18 (119 aa).

The interval Met-1 to Lys-20 is disordered. Residues Arg-9–Lys-20 show a composition bias toward basic residues.

The protein belongs to the universal ribosomal protein uL18 family. In terms of assembly, part of the 50S ribosomal subunit; part of the 5S rRNA/L5/L18/L25 subcomplex. Contacts the 5S and 23S rRNAs.

This is one of the proteins that bind and probably mediate the attachment of the 5S RNA into the large ribosomal subunit, where it forms part of the central protuberance. The protein is Large ribosomal subunit protein uL18 of Chlorobium phaeobacteroides (strain DSM 266 / SMG 266 / 2430).